A 492-amino-acid polypeptide reads, in one-letter code: Probable malate:quinone oxidoreductase 1 (492 aa).

It belongs to the MQO family. Requires FAD as cofactor.

The enzyme catalyses (S)-malate + a quinone = a quinol + oxaloacetate. Its pathway is carbohydrate metabolism; tricarboxylic acid cycle; oxaloacetate from (S)-malate (quinone route): step 1/1. This chain is Probable malate:quinone oxidoreductase 1, found in Staphylococcus aureus (strain MRSA252).